The sequence spans 215 residues: Large ribosomal subunit protein uL16 (215 aa).

The protein belongs to the universal ribosomal protein uL16 family. As to quaternary structure, component of the small ribosomal subunit. Mature ribosomes consist of a small (40S) and a large (60S) subunit. The 40S subunit contains about 33 different proteins and 1 molecule of RNA (18S). The 60S subunit contains about 49 different proteins and 3 molecules of RNA (25S, 5.8S and 5S).

This Euglena gracilis protein is Large ribosomal subunit protein uL16 (RPL10).